Reading from the N-terminus, the 124-residue chain is Fluoride-specific ion channel FluC (124 aa).

The next 4 membrane-spanning stretches (helical) occupy residues Phe5 to Leu25, Leu35 to Leu55, Leu63 to Leu83, and Leu98 to Val118. Na(+) contacts are provided by Gly73 and Thr76.

The protein belongs to the fluoride channel Fluc/FEX (TC 1.A.43) family.

The protein localises to the cell inner membrane. It carries out the reaction fluoride(in) = fluoride(out). Na(+) is not transported, but it plays an essential structural role and its presence is essential for fluoride channel function. Its function is as follows. Fluoride-specific ion channel. Important for reducing fluoride concentration in the cell, thus reducing its toxicity. The protein is Fluoride-specific ion channel FluC of Paracoccus denitrificans (strain Pd 1222).